The chain runs to 236 residues: Thiamine import ATP-binding protein ThiQ (236 aa).

The ABC transporter domain maps to 2–230 (LKLEKITYLY…SAAKASVLGI (229 aa)). Position 32 to 39 (32 to 39 (GPSGAGKS)) interacts with ATP.

It belongs to the ABC transporter superfamily. Thiamine importer (TC 3.A.1.19.1) family. The complex is composed of two ATP-binding proteins (ThiQ), two transmembrane proteins (ThiP) and a solute-binding protein (ThiB).

Its subcellular location is the cell inner membrane. It catalyses the reaction thiamine(out) + ATP + H2O = thiamine(in) + ADP + phosphate + H(+). Its function is as follows. Part of the ABC transporter complex ThiBPQ involved in thiamine import. Responsible for energy coupling to the transport system. The chain is Thiamine import ATP-binding protein ThiQ from Yersinia pestis bv. Antiqua (strain Antiqua).